Consider the following 914-residue polypeptide: Solute carrier family 12 member 9 (914 aa).

The Cytoplasmic portion of the chain corresponds to 1 to 36; the sequence is MASESSPLLAYRLLGEEGAAFPPNGAGVSGVPSSRK. Serine 6 is modified (phosphoserine). Residues 37 to 57 traverse the membrane as a helical segment; it reads LSTFLGVVVPTVLSMFSIVVF. Topologically, residues 58–72 are extracellular; sequence LRIGFVVGHAGLLQA. Residues 73–93 traverse the membrane as a helical segment; the sequence is LAMLLVAYIILALTVLSVCAI. Topologically, residues 94-119 are cytoplasmic; sequence ATNGAVRGGGAYFMISRTLGPEVGGS. A helical membrane pass occupies residues 120 to 140; that stretch reads IGLMFYLANVCGCAVSLLGLV. The Extracellular portion of the chain corresponds to 141–167; it reads ESILDVFGADATGSSGIQVLPQGYGWN. A helical membrane pass occupies residues 168–188; sequence LLYGSLLLGLVGGVCTLGAGL. Residues 189–193 are Cytoplasmic-facing; it reads YARAS. The chain crosses the membrane as a helical span at residues 194-214; it reads FLTFLLVSGSLASVLVSFVAV. Residues 215 to 262 are Extracellular-facing; it reads GPRNIPLAPRPGTNASSVPHRHGHFTGFNGSTLRDNLGAGYAEDYTTG. Asparagine 228 and asparagine 243 each carry an N-linked (GlcNAc...) asparagine glycan. A helical transmembrane segment spans residues 263-283; it reads AMMTFASVFAVLFNGCTGIMA. The Cytoplasmic portion of the chain corresponds to 284–297; the sequence is GANMSGELKDPSRA. A helical transmembrane segment spans residues 298 to 318; it reads IPLGTIIAVAYTFFIYILLFF. Residues 319–338 are Extracellular-facing; that stretch reads LSSFTCDRALLQEDYGFFRD. A helical membrane pass occupies residues 339 to 359; it reads ISLWPPLVLIGIYATALSASM. Residues 360 to 376 lie on the Cytoplasmic side of the membrane; sequence SSLIGASRILHALAQDD. Residues 377–399 form a helical membrane-spanning segment; sequence LFGVILAPAKVVSGGGNPWGAVL. Residues 400–416 lie on the Extracellular side of the membrane; that stretch reads YSWGLVQLVLLAGKLNT. Residues 417–437 form a helical membrane-spanning segment; sequence LAAVVTVFYLVAYAAVDLSCL. Over 438 to 466 the chain is Cytoplasmic; that stretch reads SLEWASAPNFRPTFSLFSWHTCLLGVASC. A helical membrane pass occupies residues 467–487; the sequence is LLMMFLISPGAAGGSLLLMGL. At 488–740 the chain is on the extracellular side; sequence LSALLTARGG…LLRPRGGPGY (253 aa). The segment at 645-678 is disordered; the sequence is PAFSEPAEGTREGGSPALSTLFPPPRAPGSPRAL. Residues 741 to 761 form a helical membrane-spanning segment; sequence VDVCGLFLLQMATILSMVPAW. Over 762–914 the chain is Cytoplasmic; sequence HSARLRIFLC…GVTPVTCTDL (153 aa). The disordered stretch occupies residues 844–864; sequence QGRGTVGGPGGPEGRDGEEGP.

It belongs to the SLC12A transporter family. As to quaternary structure, interacts with SLC12A1.

Its subcellular location is the cell membrane. It is found in the lysosome membrane. Its function is as follows. May be an inhibitor of SLC12A1. Seems to correspond to a subunit of a multimeric transport system and thus, additional subunits may be required for its function. May play a role in lysosomal ion flux and osmoregulation. This Mus musculus (Mouse) protein is Solute carrier family 12 member 9 (Slc12a9).